We begin with the raw amino-acid sequence, 30 residues long: uncharacterized protein (30 aa).

Residues 1 to 30 (MHLSTLPNVPWPNRSFTTKRPPLPNMSFSW) are disordered.

This is an uncharacterized protein from Saccharomyces cerevisiae (strain ATCC 204508 / S288c) (Baker's yeast).